A 1121-amino-acid chain; its full sequence is Peroxisomal ATPase PEX1 (1121 aa).

Disordered stretches follow at residues 187 to 221 (SISS…NNGE) and 1099 to 1121 (SGRD…STLM). Positions 205–217 (SSTSTATGRRSVT) are enriched in low complexity.

Belongs to the AAA ATPase family. As to quaternary structure, interacts with PEX6; forming the PEX1-PEX6 AAA ATPase complex, which is composed of a heterohexamer formed by a trimer of PEX1-PEX6 dimers.

It localises to the membrane. The catalysed reaction is ATP + H2O = ADP + phosphate + H(+). In terms of biological role, component of the PEX1-PEX6 AAA ATPase complex involved in peroxisome biosynthesis. The complex acts as a protein dislocase complex that mediates the ATP-dependent extraction of the PEX5 receptor from peroxisomal membranes, an essential step for PEX5 recycling. Specifically recognizes PEX5 monoubiquitinated at 'Cys-6', and pulls it out of the peroxisome lumen through the PEX2-PEX10-PEX12 retrotranslocation channel. Extraction by the PEX1-PEX6 AAA ATPase complex is accompanied by unfolding of the TPR repeats and release of bound cargo from PEX5. This chain is Peroxisomal ATPase PEX1, found in Komagataella phaffii (strain GS115 / ATCC 20864) (Yeast).